A 79-amino-acid chain; its full sequence is Acyl carrier protein (79 aa).

The Carrier domain maps to 2–77 (SDIEARVRKI…SAIDYANTHQ (76 aa)). O-(pantetheine 4'-phosphoryl)serine is present on Ser-37.

Belongs to the acyl carrier protein (ACP) family. In terms of processing, 4'-phosphopantetheine is transferred from CoA to a specific serine of apo-ACP by AcpS. This modification is essential for activity because fatty acids are bound in thioester linkage to the sulfhydryl of the prosthetic group.

It is found in the cytoplasm. Its pathway is lipid metabolism; fatty acid biosynthesis. Carrier of the growing fatty acid chain in fatty acid biosynthesis. The protein is Acyl carrier protein of Verminephrobacter eiseniae (strain EF01-2).